Here is a 110-residue protein sequence, read N- to C-terminus: Secreted Ly-6/uPAR-related protein 1 (110 aa).

A signal peptide spans 1–22; that stretch reads MTLRWAMWLLLLAAWSMGYGEA. In terms of domain architecture, UPAR/Ly6 spans 24–73; the sequence is RCYTCEQPTAINSCKNIAQCKMEDTACKTVLETVEAAFPFNHSPMVTRSC. Disulfide bonds link cysteine 25/cysteine 50, cysteine 28/cysteine 37, cysteine 43/cysteine 73, cysteine 77/cysteine 93, and cysteine 94/cysteine 99.

In terms of assembly, homodimer. Interacts with PLAU. Interacts with CHRNA7. Expressed in skin, eye, whole lung, trachea, esophagus and stomach. Widely expressed in various tissues including spleen and thymus but not pancreas. Expressed in macrophages, dendritic cells, T and B cells. Expressed in lung specifically in ciliated bronchial epithelial cells (at protein level). Expression is decreased in lungs of asthmatic model mice. Expressed in the cornea.

Its subcellular location is the secreted. Functionally, has an antitumor activity. Was found to be a marker of late differentiation of the skin. Implicated in maintaining the physiological and structural integrity of the keratinocyte layers of the skin. In vitro down-regulates keratinocyte proliferation; the function may involve the proposed role as modulator of nicotinic acetylcholine receptors (nAChRs) activity. In vitro inhibits alpha-7-dependent nAChR currents in an allosteric manner. In T cells may be involved in regulation of intracellular Ca(2+) signaling. Seems to have a immunomodulatory function in the cornea. The function may implicate a possible role as a scavenger receptor for PLAU thereby blocking PLAU-dependent functions of PLAUR such as in cell migration and proliferation. The sequence is that of Secreted Ly-6/uPAR-related protein 1 (Slurp1) from Mus musculus (Mouse).